Reading from the N-terminus, the 177-residue chain is Glutathione peroxidase homolog (177 aa).

Cys-35 is an active-site residue.

It belongs to the glutathione peroxidase family.

Functionally, important in the cellular metabolism or defense processes particular to this pathogen. The protein is Glutathione peroxidase homolog (gpxA) of Neisseria meningitidis serogroup A / serotype 4A (strain DSM 15465 / Z2491).